We begin with the raw amino-acid sequence, 101 residues long: uncharacterized protein (101 aa).

3 helical membrane passes run 20–40 (KHFI…LLGL), 59–79 (GVIA…MYIA), and 81–101 (SEMW…ALFF).

The protein resides in the endoplasmic reticulum. It localises to the membrane. This is an uncharacterized protein from Saccharomyces cerevisiae (strain ATCC 204508 / S288c) (Baker's yeast).